Consider the following 147-residue polypeptide: Globin, polymeric component P2 (147 aa).

Residues 2-146 enclose the Globin domain; it reads PLTADQVAAL…ISDALVAGLE (145 aa). Position 96 (His-96) interacts with heme b.

The protein belongs to the globin family. As to quaternary structure, polymer.

The protein is Globin, polymeric component P2 of Glycera dibranchiata (Bloodworm).